A 2431-amino-acid polypeptide reads, in one-letter code: Histone-lysine N-methyltransferase trr (2431 aa).

Disordered stretches follow at residues 34-78 (LQKR…STAP), 135-201 (DADK…ENSG), 213-235 (ASGA…AGTP), and 759-789 (QSAN…TPMN). The segment covering 142 to 165 (YRISTPRNSQSNPLLHRNTAFTSF) has biased composition (polar residues). Low complexity-rich tracts occupy residues 171–183 (ASSS…STAS), 218–235 (SSTS…AGTP), and 767–787 (ATST…NATP). Residues 801–805 (LKQLL) carry the LXXLL motif 1 motif. Disordered regions lie at residues 863–895 (PVPT…GGSS), 918–973 (VGGE…QVKQ), 1226–1292 (HPQQ…AGGA), 1404–1433 (TSGG…KGGS), and 1478–1500 (GLVG…AEKM). Low complexity-rich tracts occupy residues 866 to 895 (TATQ…GGSS), 952 to 970 (QQQQ…SPHQ), and 1226 to 1241 (HPQQ…QPQN). Over residues 1269–1281 (RKRRKREVQKPRR) the composition is skewed to basic residues. Residues 1410–1422 (PASMSSAASAGSS) show a composition bias toward low complexity. Residues 1423-1433 (SAGGGKLKGGS) are compositionally biased toward gly residues. Thr1486 carries the post-translational modification Phosphothreonine. Phosphoserine is present on residues Ser1488 and Ser1490. The short motif at 1652–1656 (LANLL) is the LXXLL motif 2 element. The disordered stretch occupies residues 1790 to 1836 (GGSAVKSSNGDSPGSFCASSTAPAEMVVKQEPEDEDEKTPSVPGNPT). Over residues 1794–1811 (VKSSNGDSPGSFCASSTA) the composition is skewed to polar residues. The segment at 1895–1935 (TRQCVFCNQRGDGQADGPSRLLNFDVDKWVHLNCALWSNGV) adopts a C2HC pre-PHD-type zinc-finger fold. Residues 1956 to 2003 (QACSACHQPGATIKCFKSRCNSLYHLPCAIREECVFYKNKSVHCSVHG) form a PHD-type zinc finger. The LXXLL motif 3 motif lies at 2060–2064 (LSNLL). Positions 2061 to 2121 (SNLLRVGNMT…CRYICSIAEA (61 aa)) constitute an FYR N-terminal domain. The FYR C-terminal domain occupies 2122-2209 (GCKPEFRIQV…ETLTDYRFKY (88 aa)). Positions 2291-2407 (NNVYLARSKI…RGEELSYDYK (117 aa)) constitute an SET domain. The Post-SET domain occupies 2415 to 2431 (HKIPCACGAPNCRKWMN).

This sequence belongs to the class V-like SAM-binding methyltransferase superfamily. Histone-lysine methyltransferase family. TRX/MLL subfamily. Component of the MLL3/4 complex composed at least of the catalytic subunit trr, ash2, Rbbp5, Dpy-30L1, wds, hcf, ptip, Pa1, Utx, Lpt and Ncoa6. Interacts with nuclear receptor EcR in an ecdysone-dependent manner. Interacts with ash2; the interaction stabilizes trr. Widely expressed.

It localises to the nucleus. The protein resides in the chromosome. It catalyses the reaction L-lysyl(4)-[histone H3] + 3 S-adenosyl-L-methionine = N(6),N(6),N(6)-trimethyl-L-lysyl(4)-[histone H3] + 3 S-adenosyl-L-homocysteine + 3 H(+). Its function is as follows. Histone methyltransferase that acts as a coactivator for the ecdysone receptor during development. Specifically trimethylates 'Lys-4' of histone H3, a specific tag for epigenetic transcriptional activation. Recruited by EcR in an ecdysone-dependent manner causing H3 'Lys-4' trimethylation at ecdysone-inducible promoters, leading to activate expression. Plays a central role in the developing compound eye, during the progression of the morphogenetic furrow and in post-furrow differentiation of the retinal epithelium, notably by activating expression of hh. Also required for wing and abdominal development. The sequence is that of Histone-lysine N-methyltransferase trr (trr) from Drosophila melanogaster (Fruit fly).